The primary structure comprises 309 residues: Methionine synthase (309 aa).

H201, C203, E224, and C285 together coordinate Zn(2+).

Belongs to the archaeal MetE family. The cofactor is Zn(2+).

It functions in the pathway amino-acid biosynthesis; L-methionine biosynthesis via de novo pathway. With respect to regulation, is activated by phosphates. Its function is as follows. Catalyzes the transfer of a methyl group to L-homocysteine resulting in methionine formation. Can use methylcobalamin and methylcobinamide as methyl donors, but methylcobalamin is not considered to be the physiological substrate. It was proposed that, in vivo, a so-far-unidentified enzyme catalyzes methyltransfer from 5-methyltetrahydromethanopterin (5-CH3-H4MPT) to a corrinoid protein, and that the MetE gene product catalyzes the further transfer to L-homocysteine. Is not active with L-cysteine, coenzyme M, coenzyme B, glutathione or dithiothreitol as substrate. This is Methionine synthase from Methanothermobacter marburgensis (strain ATCC BAA-927 / DSM 2133 / JCM 14651 / NBRC 100331 / OCM 82 / Marburg) (Methanobacterium thermoautotrophicum).